The sequence spans 901 residues: Quinate repressor protein (901 aa).

The sufficient for repression stretch occupies residues 1–88; the sequence is MSILVRPPKR…DSLQTRRKFP (88 aa). Disordered stretches follow at residues 26 to 59 and 878 to 901; these read LRDFGQGNSASTPINTSADYGRFDERPGSGDGSR and EEQGEEYDQSAMRTRLENLDGQPM. A compositionally biased stretch (polar residues) spans 31–43; that stretch reads QGNSASTPINTSA.

It in the N-terminal section; belongs to the shikimate kinase family. In the 2nd section; belongs to the type-I 3-dehydroquinase family. This sequence in the C-terminal section; belongs to the shikimate dehydrogenase family. Interacts with qutA; transcriptional activator of the quinate utilization pathway genes.

Functionally, multi-domain repressor protein that negatively regulates transcription of the quinate utilization pathway genes. May mediate its repressor activity by binding directly to the qutA activator protein. The polypeptide is Quinate repressor protein (qutR) (Emericella nidulans (strain FGSC A4 / ATCC 38163 / CBS 112.46 / NRRL 194 / M139) (Aspergillus nidulans)).